Here is an 838-residue protein sequence, read N- to C-terminus: Glycogen phosphorylase, brain form (838 aa).

Residue alanine 2 is modified to N-acetylalanine. Serine 15 carries the post-translational modification Phosphoserine. Residues aspartate 43, tyrosine 197, and arginine 310 each coordinate AMP. The residue at position 197 (tyrosine 197) is a Phosphotyrosine. Position 473 is a phosphotyrosine (tyrosine 473). Residue serine 524 is modified to Phosphoserine. Position 569 (lysine 569) interacts with pyridoxal 5'-phosphate. Positions 677 to 678 (TG) are pyridoxal 5'-phosphate. N6-(pyridoxal phosphate)lysine is present on lysine 681.

The protein belongs to the glycogen phosphorylase family. Homodimer. Dimers associate into a tetramer to form the enzymatically active phosphorylase A. It depends on pyridoxal 5'-phosphate as a cofactor. Post-translationally, phosphorylation of Ser-15 converts phosphorylase B (unphosphorylated) to phosphorylase A.

The enzyme catalyses [(1-&gt;4)-alpha-D-glucosyl](n) + phosphate = [(1-&gt;4)-alpha-D-glucosyl](n-1) + alpha-D-glucose 1-phosphate. Activity of phosphorylase is controlled both by allosteric means (through the non-covalent binding of metabolites) and by covalent modification. Thus AMP allosterically activates, whereas ATP, ADP, and glucose-6-phosphate allosterically inhibit, phosphorylase B. Glycogen phosphorylase that regulates glycogen mobilization. Phosphorylase is an important allosteric enzyme in carbohydrate metabolism. Enzymes from different sources differ in their regulatory mechanisms and in their natural substrates. However, all known phosphorylases share catalytic and structural properties. This Rattus norvegicus (Rat) protein is Glycogen phosphorylase, brain form (Pygb).